The chain runs to 403 residues: Protein-glutamate methylesterase/protein-glutamine glutaminase (403 aa).

Residues 8–126 enclose the Response regulatory domain; the sequence is AVLIVDDSAL…SAHLRTVSRK (119 aa). D59 carries the post-translational modification 4-aspartylphosphate. One can recognise a CheB-type methylesterase domain in the interval 204 to 393; it reads PLRESGALQI…VSLDDMAATI (190 aa). Residues S219, H246, and D342 contribute to the active site.

It belongs to the CheB family. In terms of processing, phosphorylated by CheA. Phosphorylation of the N-terminal regulatory domain activates the methylesterase activity.

It is found in the cytoplasm. The enzyme catalyses [protein]-L-glutamate 5-O-methyl ester + H2O = L-glutamyl-[protein] + methanol + H(+). It catalyses the reaction L-glutaminyl-[protein] + H2O = L-glutamyl-[protein] + NH4(+). Functionally, involved in chemotaxis. Part of a chemotaxis signal transduction system that modulates chemotaxis in response to various stimuli. Catalyzes the demethylation of specific methylglutamate residues introduced into the chemoreceptors (methyl-accepting chemotaxis proteins or MCP) by CheR. Also mediates the irreversible deamidation of specific glutamine residues to glutamic acid. The sequence is that of Protein-glutamate methylesterase/protein-glutamine glutaminase from Treponema pallidum (strain Nichols).